The following is a 517-amino-acid chain: GMP synthase [glutamine-hydrolyzing] (517 aa).

The region spanning 4–193 is the Glutamine amidotransferase type-1 domain; the sequence is KIIILDFGSQ…VVDICGGKQD (190 aa). Residue C79 is the Nucleophile of the active site. Active-site residues include H167 and E169. The 189-residue stretch at 194-382 folds into the GMPS ATP-PPase domain; the sequence is WSAASFIETT…LGMPEHLITR (189 aa). 221–227 lines the ATP pocket; it reads SGGVDSS.

As to quaternary structure, homodimer.

The enzyme catalyses XMP + L-glutamine + ATP + H2O = GMP + L-glutamate + AMP + diphosphate + 2 H(+). It functions in the pathway purine metabolism; GMP biosynthesis; GMP from XMP (L-Gln route): step 1/1. Functionally, catalyzes the synthesis of GMP from XMP. The protein is GMP synthase [glutamine-hydrolyzing] of Phocaeicola vulgatus (strain ATCC 8482 / DSM 1447 / JCM 5826 / CCUG 4940 / NBRC 14291 / NCTC 11154) (Bacteroides vulgatus).